We begin with the raw amino-acid sequence, 259 residues long: MKKRHTVNTIKSAKNSNKLVMITAYDALFAKLFEPIVDMILVGDSLNMVFAGRSDTLSATLDQMIYHANAVCSGAPSAFVVLDMPYGTYINEKEALQNAIRIYKETDVDAVKLEGGKEKADLIKTLCQNGIAVMGHIGLLPQHVRGQGGYKVVREADRLMEDAKALEEAGVFSIIIEGVKPEVAAKVTDAVQVPVIGIGAGKETDGQVLVWSDMLGFFEDFKPKFVKQYLNGAKLVKEAVSQYAKEVKEGSFPSQEFSY.

Residues aspartate 44 and aspartate 83 each coordinate Mg(2+). 3-methyl-2-oxobutanoate contacts are provided by residues 44–45 (DS), aspartate 83, and lysine 112. Glutamate 114 serves as a coordination point for Mg(2+). Residue glutamate 177 is the Proton acceptor of the active site.

This sequence belongs to the PanB family. Homodecamer; pentamer of dimers. Mg(2+) serves as cofactor.

It is found in the cytoplasm. It carries out the reaction 3-methyl-2-oxobutanoate + (6R)-5,10-methylene-5,6,7,8-tetrahydrofolate + H2O = 2-dehydropantoate + (6S)-5,6,7,8-tetrahydrofolate. It participates in cofactor biosynthesis; (R)-pantothenate biosynthesis; (R)-pantoate from 3-methyl-2-oxobutanoate: step 1/2. In terms of biological role, catalyzes the reversible reaction in which hydroxymethyl group from 5,10-methylenetetrahydrofolate is transferred onto alpha-ketoisovalerate to form ketopantoate. The polypeptide is 3-methyl-2-oxobutanoate hydroxymethyltransferase (Nitratiruptor sp. (strain SB155-2)).